The following is a 450-amino-acid chain: Tubulin beta-3 chain (450 aa).

Positions 1 to 4 match the MREI motif motif; it reads MREI. Residues glutamine 11, glutamate 69, serine 138, glycine 142, threonine 143, and glycine 144 each coordinate GTP. Residue glutamate 69 participates in Mg(2+) binding. At serine 172 the chain carries Phosphoserine; by CDK1. Positions 204 and 226 each coordinate GTP. The disordered stretch occupies residues 422 to 450; it reads YQQYQDATAEEEGEMYEDDDEESEAQGPK. The segment covering 429–450 has biased composition (acidic residues); it reads TAEEEGEMYEDDDEESEAQGPK. The residue at position 438 (glutamate 438) is a 5-glutamyl polyglutamate. A Phosphoserine modification is found at serine 444.

This sequence belongs to the tubulin family. In terms of assembly, heterodimer of alpha- and beta-tubulin. A typical microtubule is a hollow water-filled tube with an outer diameter of 25 nm and an inner diameter of 15 nM. Alpha-beta heterodimers associate head-to-tail to form protofilaments running lengthwise along the microtubule wall with the beta-tubulin subunit facing the microtubule plus end conferring a structural polarity. Microtubules usually have 13 protofilaments but different protofilament numbers can be found in some organisms and specialized cells. Interacts with gamma-tubulin; the interaction allows microtubules to nucleate from the gamma-tubulin ring complex (gTuRC). Interacts with UNC5C (via cytoplasmic domain); this interaction is decreased by NTN1/Netrin-1. Interacts with NLRP5/MATER at cytoskeleton microtubules. Interacts with DPYSL5. Interacts with CFAP61. The cofactor is Mg(2+). Post-translationally, some glutamate residues at the C-terminus are polyglycylated, resulting in polyglycine chains on the gamma-carboxyl group. Glycylation is mainly limited to tubulin incorporated into axonemes (cilia and flagella) whereas glutamylation is prevalent in neuronal cells, centrioles, axonemes, and the mitotic spindle. Both modifications can coexist on the same protein on adjacent residues, and lowering polyglycylation levels increases polyglutamylation, and reciprocally. Cilia and flagella glycylation is required for their stability and maintenance. Flagella glycylation controls sperm motility. Some glutamate residues at the C-terminus are polyglutamylated, resulting in polyglutamate chains on the gamma-carboxyl group. Polyglutamylation plays a key role in microtubule severing by spastin (SPAST). SPAST preferentially recognizes and acts on microtubules decorated with short polyglutamate tails: severing activity by SPAST increases as the number of glutamates per tubulin rises from one to eight, but decreases beyond this glutamylation threshold. Glutamylation is also involved in cilia motility. In terms of processing, phosphorylated on Ser-172 by CDK1 during the cell cycle, from metaphase to telophase, but not in interphase. This phosphorylation inhibits tubulin incorporation into microtubules.

The protein localises to the cytoplasm. Its subcellular location is the cytoskeleton. The protein resides in the cell projection. It localises to the growth cone. It is found in the lamellipodium. The protein localises to the filopodium. Its function is as follows. Tubulin is the major constituent of microtubules, protein filaments consisting of alpha- and beta-tubulin heterodimers. Microtubules grow by the addition of GTP-tubulin dimers to the microtubule end, where a stabilizing cap forms. Below the cap, alpha-beta tubulin heterodimers are in GDP-bound state, owing to GTPase activity of alpha-tubulin. TUBB3 plays a critical role in proper axon guidance and maintenance. Binding of NTN1/Netrin-1 to its receptor UNC5C might cause dissociation of UNC5C from polymerized TUBB3 in microtubules and thereby lead to increased microtubule dynamics and axon repulsion. Plays a role in dorsal root ganglion axon projection towards the spinal cord. In Rattus norvegicus (Rat), this protein is Tubulin beta-3 chain (Tubb3).